A 429-amino-acid polypeptide reads, in one-letter code: Glutamate-1-semialdehyde 2,1-aminomutase (429 aa).

K265 is subject to N6-(pyridoxal phosphate)lysine.

It belongs to the class-III pyridoxal-phosphate-dependent aminotransferase family. HemL subfamily. In terms of assembly, homodimer. Requires pyridoxal 5'-phosphate as cofactor.

Its subcellular location is the cytoplasm. It carries out the reaction (S)-4-amino-5-oxopentanoate = 5-aminolevulinate. It functions in the pathway porphyrin-containing compound metabolism; protoporphyrin-IX biosynthesis; 5-aminolevulinate from L-glutamyl-tRNA(Glu): step 2/2. The chain is Glutamate-1-semialdehyde 2,1-aminomutase from Legionella pneumophila (strain Corby).